The primary structure comprises 159 residues: L-alanine exporter AlaE (159 aa).

Transmembrane regions (helical) follow at residues 17–37 (FAMV…VSGM), 48–68 (LSIP…DYLL), 86–106 (MVAY…AVGA), and 110–130 (QIIT…IVYG).

The protein belongs to the AlaE exporter family.

It localises to the cell inner membrane. Functionally, exports L-alanine. The protein is L-alanine exporter AlaE of Photobacterium profundum (strain SS9).